Here is a 170-residue protein sequence, read N- to C-terminus: MAIKNLQNNNDLSELLVSVRRVTTVTKGGRRFSFSILVVVGDEKGRVGCGIGKHAEVAEARVKAVNAAKKSMIRVYLREGRTLHHDIKAKFCSGEIVLRTARAGTGIIAGGAIRSVFEVLGIKDVVAKSTRSNNPHNVICAVFKAFDSMLSPRQVASKRGKKISEIVGNR.

The 64-residue stretch at 12-75 (LSELLVSVRR…NAAKKSMIRV (64 aa)) folds into the S5 DRBM domain.

This sequence belongs to the universal ribosomal protein uS5 family. Part of the 30S ribosomal subunit. Contacts proteins S4 and S8.

Functionally, with S4 and S12 plays an important role in translational accuracy. Located at the back of the 30S subunit body where it stabilizes the conformation of the head with respect to the body. The chain is Small ribosomal subunit protein uS5 from Wolbachia pipientis wMel.